The following is a 385-amino-acid chain: Leucine aminopeptidase 1 (385 aa).

The signal sequence occupies residues methionine 1 to alanine 19. Positions alanine 20–valine 87 are excised as a propeptide. A glycan (N-linked (GlcNAc...) asparagine) is linked at asparagine 177. Residues histidine 185 and aspartate 204 each coordinate Zn(2+). A glycan (N-linked (GlcNAc...) asparagine) is linked at asparagine 229. Zn(2+) is bound by residues glutamate 243 and aspartate 270. Cysteine 319 and cysteine 323 are disulfide-bonded. Position 352 (histidine 352) interacts with Zn(2+).

Belongs to the peptidase M28 family. M28E subfamily. In terms of assembly, monomer. Zn(2+) serves as cofactor.

The protein localises to the secreted. In terms of biological role, extracellular aminopeptidase that allows assimilation of proteinaceous substrates. This is Leucine aminopeptidase 1 (LAP1) from Blastomyces gilchristii (strain SLH14081) (Blastomyces dermatitidis).